A 117-amino-acid chain; its full sequence is Probable prefoldin subunit 1 (117 aa).

It belongs to the prefoldin subunit beta family. As to quaternary structure, heterohexamer of two PFD-alpha type and four PFD-beta type subunits. Expressed in the distal cell tip of developing embryos.

Its subcellular location is the cytoplasm. Binds specifically to cytosolic chaperonin (c-CPN) and transfers target proteins to it. Binds to nascent polypeptide chain and promotes folding in an environment in which there are many competing pathways for nonnative proteins. Has a role in gonadogenesis. This is Probable prefoldin subunit 1 (pfd-1) from Caenorhabditis elegans.